A 220-amino-acid polypeptide reads, in one-letter code: Germin-like protein subfamily T member 2 (220 aa).

Residues 1-27 (MTTLQISSSLFRSFLLVICVFVIPSLS) form the signal peptide. A disulfide bridge connects residues Cys-37 and Cys-52. The Cupin type-1 domain maps to 64-212 (SGLGGPLNTS…TFRTDDVTVN (149 aa)). N-linked (GlcNAc...) asparagine glycosylation is present at Asn-71. Positions 112, 114, and 119 each coordinate Mn(2+). Residue Asn-136 is glycosylated (N-linked (GlcNAc...) asparagine). His-158 serves as a coordination point for Mn(2+).

This sequence belongs to the germin family. Oligomer (believed to be a pentamer but probably hexamer).

The protein resides in the secreted. It localises to the extracellular space. Its subcellular location is the apoplast. Functionally, may play a role in plant defense. Probably has no oxalate oxidase activity even if the active site is conserved. In Arabidopsis thaliana (Mouse-ear cress), this protein is Germin-like protein subfamily T member 2.